A 365-amino-acid polypeptide reads, in one-letter code: Hematopoietic SH2 domain-containing protein homolog (365 aa).

Residues 34–125 enclose the SH2 domain; the sequence is WFHGIISRKA…PYNELLTVAC (92 aa). Disordered stretches follow at residues 199–278 and 335–365; these read QSTD…QQKP and AEHP…APGY. The segment covering 257–277 has biased composition (polar residues); it reads QQITPNTPNEGRTQQKNQQQK.

May be an adapter protein involved in tyrosine kinase signaling. The polypeptide is Hematopoietic SH2 domain-containing protein homolog (hsh2d) (Danio rerio (Zebrafish)).